Reading from the N-terminus, the 343-residue chain is Anthranilate phosphoribosyltransferase (343 aa).

5-phospho-alpha-D-ribose 1-diphosphate contacts are provided by residues Gly-84, 87–88 (GD), Thr-92, 94–97 (NIST), 112–120 (KHGNRGVSS), and Ser-124. Gly-84 serves as a coordination point for anthranilate. A Mg(2+)-binding site is contributed by Ser-96. Asn-115 serves as a coordination point for anthranilate. Arg-170 provides a ligand contact to anthranilate. Residues Asp-229 and Glu-230 each coordinate Mg(2+).

This sequence belongs to the anthranilate phosphoribosyltransferase family. As to quaternary structure, homodimer. The cofactor is Mg(2+).

The catalysed reaction is N-(5-phospho-beta-D-ribosyl)anthranilate + diphosphate = 5-phospho-alpha-D-ribose 1-diphosphate + anthranilate. It participates in amino-acid biosynthesis; L-tryptophan biosynthesis; L-tryptophan from chorismate: step 2/5. Catalyzes the transfer of the phosphoribosyl group of 5-phosphorylribose-1-pyrophosphate (PRPP) to anthranilate to yield N-(5'-phosphoribosyl)-anthranilate (PRA). This Burkholderia pseudomallei (strain 1106a) protein is Anthranilate phosphoribosyltransferase.